The chain runs to 200 residues: UPF0488 protein CG14286 (200 aa).

Disordered stretches follow at residues 1 to 28 (MHKRRTAKSINKPPPIQGAIKKPTPVAE) and 139 to 174 (KDFRFNFPSPAEDTSSKEPQPVQDFDPSSLQPAEAG).

Belongs to the UPF0488 family.

This is UPF0488 protein CG14286 from Drosophila melanogaster (Fruit fly).